The chain runs to 1061 residues: Bifunctional cytochrome P450/NADPH--P450 reductase 1 (1061 aa).

The tract at residues 1–475 (MKETSPIPQP…AEKAAPDEQK (475 aa)) is cytochrome P450. Position 403 (Cys-403) interacts with heme. The segment at 476–1061 (EKTEAKGASV…MYAKDVWAGI (586 aa)) is NADPH--P450 reductase. Residues 493-632 (LLVLYGSDTG…QLDEWKKSMW (140 aa)) enclose the Flavodoxin-like domain. Residues 499–504 (SDTGTA), 546–549 (SYNG), 580–582 (CGD), and 588–590 (TYQ) each bind FMN. Positions 671-904 (YEASHASIAE…RTPESRFQLP (234 aa)) constitute an FAD-binding FR-type domain.

The protein in the N-terminal section; belongs to the cytochrome P450 family. FAD serves as cofactor. Requires FMN as cofactor. Heme b is required as a cofactor.

It localises to the cytoplasm. The enzyme catalyses an organic molecule + reduced [NADPH--hemoprotein reductase] + O2 = an alcohol + oxidized [NADPH--hemoprotein reductase] + H2O + H(+). It carries out the reaction 2 oxidized [cytochrome P450] + NADPH = 2 reduced [cytochrome P450] + NADP(+) + H(+). In terms of biological role, functions as a fatty acid monooxygenase. Catalyzes hydroxylation of a range of long-chain fatty acids, with a preference for long-chain unsaturated and branched-chain fatty acids over saturated fatty acids. Hydroxylation of myristic acid occurs mainly at the omega-2 position. Also displays a NADPH-dependent reductase activity in the C-terminal domain, which allows electron transfer from NADPH to the heme iron of the cytochrome P450 N-terminal domain. Is also able to catalyze efficient oxidation of sodium dodecyl sulfate (SDS). The protein is Bifunctional cytochrome P450/NADPH--P450 reductase 1 of Bacillus subtilis (strain 168).